Here is a 214-residue protein sequence, read N- to C-terminus: Nascent polypeptide-associated complex subunit alpha (214 aa).

A disordered region spans residues 1-80; sequence MPGEATETVP…SEKKARKAMS (80 aa). The segment covering 29 to 40 has biased composition (acidic residues); sequence SDSDDSPPELEQ. Low complexity predominate over residues 41–56; that stretch reads DSTQTTTQQAQLAAAA. One can recognise an NAC-A/B domain in the interval 69–134; the sequence is SRSEKKARKA…AKIEDLSQQA (66 aa). The UBA domain occupies 175 to 212; that stretch reads VEVKDIELVMSQANVSRAKAVRALKNNSNDIVNAIMEL.

The protein belongs to the NAC-alpha family.

Its function is as follows. May promote appropriate targeting of ribosome-nascent polypeptide complexes. The sequence is that of Nascent polypeptide-associated complex subunit alpha (naca) from Xenopus tropicalis (Western clawed frog).